Here is a 193-residue protein sequence, read N- to C-terminus: Ion-translocating oxidoreductase complex subunit A (193 aa).

The next 6 helical transmembrane spans lie at 5 to 25 (LLLFVGTILVNNFVLVKFLGL), 39 to 59 (MGMGLATTFVMTLASICAWLI), 63 to 83 (ILIPLNLIYLRTLAFILVIAV), 102 to 122 (LLGIFLPLITTNCAVLGVALL), 134 to 154 (ALYGFSAAVGFSLVMVLFTAI), and 171 to 191 (AIALITAGLMSLAFMGFSGLV).

Belongs to the NqrDE/RnfAE family. In terms of assembly, the complex is composed of six subunits: RsxA, RsxB, RsxC, RsxD, RsxE and RsxG.

It localises to the cell inner membrane. In terms of biological role, part of a membrane-bound complex that couples electron transfer with translocation of ions across the membrane. Required to maintain the reduced state of SoxR. This Shigella boydii serotype 4 (strain Sb227) protein is Ion-translocating oxidoreductase complex subunit A.